The following is a 257-amino-acid chain: NAD-capped RNA hydrolase NudC (257 aa).

Residues K25 and R69 each coordinate substrate. Positions 98 and 101 each coordinate Zn(2+). E111 contributes to the substrate binding site. Zn(2+)-binding residues include C116 and C119. Substrate is bound at residue Y124. The Nudix hydrolase domain maps to 125–248 (PQIAPCIIVA…TVARRLIEDT (124 aa)). Positions 158, 174, and 178 each coordinate a divalent metal cation. Positions 159–180 (GFVEVGETLEQAVAREVMEESG) match the Nudix box motif. Residue 192-199 (QPWPFPQS) coordinates substrate. E219 lines the a divalent metal cation pocket. Position 241 (A241) interacts with substrate.

This sequence belongs to the Nudix hydrolase family. NudC subfamily. Homodimer. The cofactor is Mg(2+). Requires Mn(2+) as cofactor. It depends on Zn(2+) as a cofactor.

The catalysed reaction is a 5'-end NAD(+)-phospho-ribonucleoside in mRNA + H2O = a 5'-end phospho-adenosine-phospho-ribonucleoside in mRNA + beta-nicotinamide D-ribonucleotide + 2 H(+). It catalyses the reaction NAD(+) + H2O = beta-nicotinamide D-ribonucleotide + AMP + 2 H(+). The enzyme catalyses NADH + H2O = reduced beta-nicotinamide D-ribonucleotide + AMP + 2 H(+). Its function is as follows. mRNA decapping enzyme that specifically removes the nicotinamide adenine dinucleotide (NAD) cap from a subset of mRNAs by hydrolyzing the diphosphate linkage to produce nicotinamide mononucleotide (NMN) and 5' monophosphate mRNA. The NAD-cap is present at the 5'-end of some mRNAs and stabilizes RNA against 5'-processing. Has preference for mRNAs with a 5'-end purine. Catalyzes the hydrolysis of a broad range of dinucleotide pyrophosphates. The polypeptide is NAD-capped RNA hydrolase NudC (Shigella flexneri serotype 5b (strain 8401)).